The sequence spans 610 residues: UvrABC system protein C (610 aa).

The GIY-YIG domain maps to 16–94 (SQPGVYRMYD…IKLYQPRYNV (79 aa)). Residues 204–239 (DQVLTQLIARMEKASQDLAFEEAARIRDQIQAVRRV) enclose the UVR domain.

Belongs to the UvrC family. In terms of assembly, interacts with UvrB in an incision complex.

The protein resides in the cytoplasm. Its function is as follows. The UvrABC repair system catalyzes the recognition and processing of DNA lesions. UvrC both incises the 5' and 3' sides of the lesion. The N-terminal half is responsible for the 3' incision and the C-terminal half is responsible for the 5' incision. The polypeptide is UvrABC system protein C (Salmonella dublin (strain CT_02021853)).